Consider the following 494-residue polypeptide: Guanosine-5'-triphosphate,3'-diphosphate pyrophosphatase (494 aa).

This sequence belongs to the GppA/Ppx family. GppA subfamily.

The catalysed reaction is guanosine 3'-diphosphate 5'-triphosphate + H2O = guanosine 3',5'-bis(diphosphate) + phosphate + H(+). Its pathway is purine metabolism; ppGpp biosynthesis; ppGpp from GTP: step 2/2. Catalyzes the conversion of pppGpp to ppGpp. Guanosine pentaphosphate (pppGpp) is a cytoplasmic signaling molecule which together with ppGpp controls the 'stringent response', an adaptive process that allows bacteria to respond to amino acid starvation, resulting in the coordinated regulation of numerous cellular activities. This Escherichia coli O127:H6 (strain E2348/69 / EPEC) protein is Guanosine-5'-triphosphate,3'-diphosphate pyrophosphatase.